Reading from the N-terminus, the 86-residue chain is Small ribosomal subunit protein uS17 (86 aa).

It belongs to the universal ribosomal protein uS17 family. In terms of assembly, part of the 30S ribosomal subunit.

In terms of biological role, one of the primary rRNA binding proteins, it binds specifically to the 5'-end of 16S ribosomal RNA. The protein is Small ribosomal subunit protein uS17 of Halalkalibacterium halodurans (strain ATCC BAA-125 / DSM 18197 / FERM 7344 / JCM 9153 / C-125) (Bacillus halodurans).